A 146-amino-acid chain; its full sequence is 3-hydroxyacyl-[acyl-carrier-protein] dehydratase FabZ (146 aa).

Residue histidine 49 is part of the active site.

The protein belongs to the thioester dehydratase family. FabZ subfamily.

Its subcellular location is the cytoplasm. The catalysed reaction is a (3R)-hydroxyacyl-[ACP] = a (2E)-enoyl-[ACP] + H2O. In terms of biological role, involved in unsaturated fatty acids biosynthesis. Catalyzes the dehydration of short chain beta-hydroxyacyl-ACPs and long chain saturated and unsaturated beta-hydroxyacyl-ACPs. This chain is 3-hydroxyacyl-[acyl-carrier-protein] dehydratase FabZ, found in Pseudomonas aeruginosa (strain LESB58).